Consider the following 166-residue polypeptide: Small heat shock protein OV25-2 (166 aa).

Residues 38–149 (LNECNIGNSL…ASRNIPIRAS (112 aa)) enclose the sHSP domain. Residues 140–166 (ASRNIPIRASPKEPEANQKSAINDAKQ) are disordered.

The protein belongs to the small heat shock protein (HSP20) family.

In Onchocerca volvulus, this protein is Small heat shock protein OV25-2 (OV25-2).